Consider the following 319-residue polypeptide: Acetyl-coenzyme A carboxylase carboxyl transferase subunit alpha (319 aa).

The CoA carboxyltransferase C-terminal domain maps to 35 to 296; that stretch reads NLDEEVQRLR…KAQLLADLLD (262 aa).

This sequence belongs to the AccA family. As to quaternary structure, acetyl-CoA carboxylase is a heterohexamer composed of biotin carboxyl carrier protein (AccB), biotin carboxylase (AccC) and two subunits each of ACCase subunit alpha (AccA) and ACCase subunit beta (AccD).

The protein localises to the cytoplasm. The enzyme catalyses N(6)-carboxybiotinyl-L-lysyl-[protein] + acetyl-CoA = N(6)-biotinyl-L-lysyl-[protein] + malonyl-CoA. Its pathway is lipid metabolism; malonyl-CoA biosynthesis; malonyl-CoA from acetyl-CoA: step 1/1. Component of the acetyl coenzyme A carboxylase (ACC) complex. First, biotin carboxylase catalyzes the carboxylation of biotin on its carrier protein (BCCP) and then the CO(2) group is transferred by the carboxyltransferase to acetyl-CoA to form malonyl-CoA. In Pectobacterium atrosepticum (strain SCRI 1043 / ATCC BAA-672) (Erwinia carotovora subsp. atroseptica), this protein is Acetyl-coenzyme A carboxylase carboxyl transferase subunit alpha.